Here is a 315-residue protein sequence, read N- to C-terminus: Methionyl-tRNA formyltransferase (315 aa).

113-116 contacts (6S)-5,6,7,8-tetrahydrofolate; that stretch reads SLLP.

It belongs to the Fmt family.

The catalysed reaction is L-methionyl-tRNA(fMet) + (6R)-10-formyltetrahydrofolate = N-formyl-L-methionyl-tRNA(fMet) + (6S)-5,6,7,8-tetrahydrofolate + H(+). Attaches a formyl group to the free amino group of methionyl-tRNA(fMet). The formyl group appears to play a dual role in the initiator identity of N-formylmethionyl-tRNA by promoting its recognition by IF2 and preventing the misappropriation of this tRNA by the elongation apparatus. The chain is Methionyl-tRNA formyltransferase from Escherichia fergusonii (strain ATCC 35469 / DSM 13698 / CCUG 18766 / IAM 14443 / JCM 21226 / LMG 7866 / NBRC 102419 / NCTC 12128 / CDC 0568-73).